We begin with the raw amino-acid sequence, 363 residues long: Cinnamyl alcohol dehydrogenase 2 (363 aa).

Cys47 contacts Zn(2+). An NADP(+)-binding site is contributed by Thr49. The Zn(2+) site is built by His69, Glu70, Cys100, Cys103, Cys106, Cys114, and Cys163. Residues Thr167, 188–193, 211–216, Thr251, Gly275, and 298–300 contribute to the NADP(+) site; these read GLGGVG, SSSARK, and SFI.

This sequence belongs to the zinc-containing alcohol dehydrogenase family. As to quaternary structure, homodimer. Zn(2+) serves as cofactor. As to expression, expressed in roots behind the root tips in the pericycle region and layer of cortical cells adjacent to the exodermis. Expressed in vascular bundles and lateral veins of leaf sheaths and blades. Expressed in the vicinity of vascular bundles in the first internode below the inflorescence. Highly expressed in the culm.

The enzyme catalyses (E)-cinnamyl alcohol + NADP(+) = (E)-cinnamaldehyde + NADPH + H(+). It carries out the reaction (E)-coniferol + NADP(+) = (E)-coniferaldehyde + NADPH + H(+). It catalyses the reaction (E)-sinapyl alcohol + NADP(+) = (E)-sinapaldehyde + NADPH + H(+). The catalysed reaction is (E)-4-coumaroyl alcohol + NADP(+) = (E)-4-coumaraldehyde + NADPH + H(+). The enzyme catalyses (E)-caffeyl alcohol + NADP(+) = (E)-caffeyl aldehyde + NADPH + H(+). It participates in aromatic compound metabolism; phenylpropanoid biosynthesis. Its function is as follows. Involved in lignin biosynthesis. Catalyzes the final step specific for the production of lignin monomers. Catalyzes the NADPH-dependent reduction of coniferaldehyde and sinapaldehyde to their respective alcohols. Plays the major role in monolignol biosynthesis. Functions cooperatively with COMT in the culm internodes for the biosynthesis of monolignols, the lignin precursors. May be involved in lignin biosynthesis in leaves and roots. This chain is Cinnamyl alcohol dehydrogenase 2, found in Oryza sativa subsp. japonica (Rice).